The following is a 156-amino-acid chain: ATP synthase subunit b (156 aa).

Residues 11 to 31 traverse the membrane as a helical segment; sequence AIAFAIFVMFCMKFVWPPLIG.

It belongs to the ATPase B chain family. In terms of assembly, F-type ATPases have 2 components, F(1) - the catalytic core - and F(0) - the membrane proton channel. F(1) has five subunits: alpha(3), beta(3), gamma(1), delta(1), epsilon(1). F(0) has three main subunits: a(1), b(2) and c(10-14). The alpha and beta chains form an alternating ring which encloses part of the gamma chain. F(1) is attached to F(0) by a central stalk formed by the gamma and epsilon chains, while a peripheral stalk is formed by the delta and b chains.

The protein localises to the cell inner membrane. F(1)F(0) ATP synthase produces ATP from ADP in the presence of a proton or sodium gradient. F-type ATPases consist of two structural domains, F(1) containing the extramembraneous catalytic core and F(0) containing the membrane proton channel, linked together by a central stalk and a peripheral stalk. During catalysis, ATP synthesis in the catalytic domain of F(1) is coupled via a rotary mechanism of the central stalk subunits to proton translocation. Its function is as follows. Component of the F(0) channel, it forms part of the peripheral stalk, linking F(1) to F(0). In Psychrobacter cryohalolentis (strain ATCC BAA-1226 / DSM 17306 / VKM B-2378 / K5), this protein is ATP synthase subunit b.